We begin with the raw amino-acid sequence, 20 residues long: Pregnancy-associated glycoprotein 73B (20 aa).

This sequence belongs to the peptidase A1 family. N-glycosylated. Expressed in chorionic epithelium (trophectoderm).

It localises to the secreted. It is found in the extracellular space. The protein is Pregnancy-associated glycoprotein 73B of Bubalus bubalis (Domestic water buffalo).